Consider the following 73-residue polypeptide: Lactogenin (73 aa).

Position 1 is a pyrrolidone carboxylic acid (Gln-1).

Belongs to the pancreatic ribonuclease family. As to expression, milk.

Its subcellular location is the secreted. In terms of biological role, secretory RNase specific towards pyrimidine bases, with higher activity towards poly C than poly U. Inhibits cell-free translation. The protein is Lactogenin of Bos taurus (Bovine).